The following is a 179-amino-acid chain: Cytochrome b6-f complex iron-sulfur subunit (179 aa).

A helical transmembrane segment spans residues 21–43 (LLTFGSVTGVALGALYPVVNYFI). The Rieske domain maps to 61-162 (GNDVVLSKFL…VSVTDDKVFL (102 aa)). Residues cysteine 108, histidine 110, cysteine 126, and histidine 129 each coordinate [2Fe-2S] cluster. Cysteines 113 and 128 form a disulfide.

This sequence belongs to the Rieske iron-sulfur protein family. The 4 large subunits of the cytochrome b6-f complex are cytochrome b6, subunit IV (17 kDa polypeptide, PetD), cytochrome f and the Rieske protein, while the 4 small subunits are PetG, PetL, PetM and PetN. The complex functions as a dimer. [2Fe-2S] cluster is required as a cofactor.

Its subcellular location is the cellular thylakoid membrane. It catalyses the reaction 2 oxidized [plastocyanin] + a plastoquinol + 2 H(+)(in) = 2 reduced [plastocyanin] + a plastoquinone + 4 H(+)(out). In terms of biological role, component of the cytochrome b6-f complex, which mediates electron transfer between photosystem II (PSII) and photosystem I (PSI), cyclic electron flow around PSI, and state transitions. The polypeptide is Cytochrome b6-f complex iron-sulfur subunit (Synechococcus elongatus (strain ATCC 33912 / PCC 7942 / FACHB-805) (Anacystis nidulans R2)).